The chain runs to 274 residues: Protein TIC 20-I, chloroplastic (274 aa).

The transit peptide at 1–65 directs the protein to the chloroplast; sequence MITGYSTPSA…ELPRVSRGVP (65 aa). The next 4 membrane-spanning stretches (helical) occupy residues 130–152, 167–187, 200–220, and 229–249; these read LPYLMPLHETWMYAETAYHLHPF, IGRLPSWFLMAYFFVAYLGIV, VVMGMLLEIALQVIGTVSKWM, and FGMHFWTAVAFAYLFTVLESI.

It belongs to the Tic20 family. Part of the Tic complex. Component of the 1-MD complex, composed of TIC20-I, TIC214, TIC100 and TIC56. Interacts with the translocating preproteins. Hydrolysis of ATP is essential for the formation of this complex. The 1-MD complex interacts with TIC21. As to expression, expressed in leaves, shoots and roots. High expression in mature photosynthetic tissues. Lower levels in non-photosynthetic tissues and roots.

It localises to the plastid. The protein resides in the chloroplast inner membrane. In terms of biological role, involved in protein precursor import into chloroplasts. May be part of an intermediate translocation complex acting as a protein-conducting channel at the inner envelope. Seems to be specific for photosynthesis-related pre-proteins. Partially redundant with TIC20-IV, but not with TIC20-II or TIC20-V. This is Protein TIC 20-I, chloroplastic from Arabidopsis thaliana (Mouse-ear cress).